Here is a 380-residue protein sequence, read N- to C-terminus: Putative heat stress transcription factor B-4a (380 aa).

The tract at residues leucine 216 to valine 245 is hydrophobic repeat HR-A/B. Disordered regions lie at residues proline 268–glutamate 296 and isoleucine 314–proline 380. A compositionally biased stretch (low complexity) spans valine 278 to glutamate 296. The short motif at arginine 346–arginine 348 is the Nuclear localization signal element.

This sequence belongs to the HSF family. Class B subfamily. As to quaternary structure, homotrimer. In terms of processing, exhibits temperature-dependent phosphorylation.

The protein localises to the nucleus. Functionally, transcriptional regulator that specifically binds DNA of heat shock promoter elements (HSE). The polypeptide is Putative heat stress transcription factor B-4a (HSFB4A) (Oryza sativa subsp. japonica (Rice)).